The primary structure comprises 607 residues: UvrABC system protein C (607 aa).

A GIY-YIG domain is found at 11 to 89; that stretch reads CKPGVYRFED…IKEFAPPCNV (79 aa). The UVR domain maps to 201-236; that stretch reads SSLLESLKKKMLKASKNKEYEEAAILRDKIQAAQTV.

Belongs to the UvrC family. In terms of assembly, interacts with UvrB in an incision complex.

Its subcellular location is the cytoplasm. The UvrABC repair system catalyzes the recognition and processing of DNA lesions. UvrC both incises the 5' and 3' sides of the lesion. The N-terminal half is responsible for the 3' incision and the C-terminal half is responsible for the 5' incision. This Tropheryma whipplei (strain TW08/27) (Whipple's bacillus) protein is UvrABC system protein C.